Here is a 335-residue protein sequence, read N- to C-terminus: Biotin synthase (335 aa).

One can recognise a Radical SAM core domain in the interval 51–278 (NTVQLSSLLS…LAKVRLSAGR (228 aa)). [4Fe-4S] cluster is bound by residues Cys-66, Cys-70, and Cys-73. 4 residues coordinate [2Fe-2S] cluster: Cys-110, Cys-141, Cys-201, and Arg-273.

Belongs to the radical SAM superfamily. Biotin synthase family. Homodimer. Requires [4Fe-4S] cluster as cofactor. [2Fe-2S] cluster is required as a cofactor.

The enzyme catalyses (4R,5S)-dethiobiotin + (sulfur carrier)-SH + 2 reduced [2Fe-2S]-[ferredoxin] + 2 S-adenosyl-L-methionine = (sulfur carrier)-H + biotin + 2 5'-deoxyadenosine + 2 L-methionine + 2 oxidized [2Fe-2S]-[ferredoxin]. It participates in cofactor biosynthesis; biotin biosynthesis; biotin from 7,8-diaminononanoate: step 2/2. Functionally, catalyzes the conversion of dethiobiotin (DTB) to biotin by the insertion of a sulfur atom into dethiobiotin via a radical-based mechanism. This is Biotin synthase from Bordetella bronchiseptica (strain ATCC BAA-588 / NCTC 13252 / RB50) (Alcaligenes bronchisepticus).